The chain runs to 689 residues: Glycine--tRNA ligase beta subunit (689 aa).

Belongs to the class-II aminoacyl-tRNA synthetase family. In terms of assembly, tetramer of two alpha and two beta subunits.

It localises to the cytoplasm. The enzyme catalyses tRNA(Gly) + glycine + ATP = glycyl-tRNA(Gly) + AMP + diphosphate. In Shewanella halifaxensis (strain HAW-EB4), this protein is Glycine--tRNA ligase beta subunit.